We begin with the raw amino-acid sequence, 338 residues long: Glycerol-3-phosphate dehydrogenase [NAD(P)+] (338 aa).

3 residues coordinate NADPH: S13, W14, and K108. K108, G139, and S141 together coordinate sn-glycerol 3-phosphate. Residue A143 coordinates NADPH. The sn-glycerol 3-phosphate site is built by K194, D247, S257, R258, and N259. The active-site Proton acceptor is the K194. R258 is an NADPH binding site. 2 residues coordinate NADPH: V282 and E284.

Belongs to the NAD-dependent glycerol-3-phosphate dehydrogenase family.

The protein localises to the cytoplasm. It catalyses the reaction sn-glycerol 3-phosphate + NAD(+) = dihydroxyacetone phosphate + NADH + H(+). The catalysed reaction is sn-glycerol 3-phosphate + NADP(+) = dihydroxyacetone phosphate + NADPH + H(+). The protein operates within membrane lipid metabolism; glycerophospholipid metabolism. Functionally, catalyzes the reduction of the glycolytic intermediate dihydroxyacetone phosphate (DHAP) to sn-glycerol 3-phosphate (G3P), the key precursor for phospholipid synthesis. This Streptococcus gordonii (strain Challis / ATCC 35105 / BCRC 15272 / CH1 / DL1 / V288) protein is Glycerol-3-phosphate dehydrogenase [NAD(P)+].